The primary structure comprises 196 residues: Venom platylysin (196 aa).

This sequence belongs to the redulysin-like family. In terms of tissue distribution, expressed by the venom gland.

The protein resides in the secreted. Its function is as follows. Probable insecticidal toxin that has been detected in a semi-pure insecticidal fraction. The chain is Venom platylysin from Platymeris biguttatus (Two-spotted assassin bug).